We begin with the raw amino-acid sequence, 693 residues long: Periplasmic alpha-galactoside-binding protein (693 aa).

A signal peptide spans 1 to 20 (MKTHRLNMTASLLIGISAFA).

This sequence belongs to the bacterial solute-binding protein 5 family.

The protein resides in the periplasm. In terms of biological role, involved in the transport of alpha-galactosides. Required for the utilization of raffinose and melibiose. Probably acts as a periplasmic substrate-binding protein for a transport system. This Rhizobium meliloti (strain 1021) (Ensifer meliloti) protein is Periplasmic alpha-galactoside-binding protein.